Here is a 496-residue protein sequence, read N- to C-terminus: Omega-crystallin (496 aa).

The protein belongs to the aldehyde dehydrogenase family. Lens.

Functionally, omega-crystallins are structural components of squids and octopi eye lens. Contains relatively little if any DHAL activity. The chain is Omega-crystallin from Enteroctopus dofleini (North Pacific giant octopus).